A 295-amino-acid polypeptide reads, in one-letter code: uncharacterized protein (295 aa).

It belongs to the NAD(P)-dependent epimerase/dehydratase family.

This is an uncharacterized protein from Schizosaccharomyces pombe (strain 972 / ATCC 24843) (Fission yeast).